Reading from the N-terminus, the 274-residue chain is Diaminopimelate epimerase (274 aa).

Residues N13, Q45, and N63 each contribute to the substrate site. The Proton donor role is filled by C72. Residues 73 to 74, N158, N191, and 209 to 210 each bind substrate; these read GN and ER. The Proton acceptor role is filled by C218. 219 to 220 provides a ligand contact to substrate; the sequence is GT.

The protein belongs to the diaminopimelate epimerase family. As to quaternary structure, homodimer.

Its subcellular location is the cytoplasm. The enzyme catalyses (2S,6S)-2,6-diaminopimelate = meso-2,6-diaminopimelate. It participates in amino-acid biosynthesis; L-lysine biosynthesis via DAP pathway; DL-2,6-diaminopimelate from LL-2,6-diaminopimelate: step 1/1. In terms of biological role, catalyzes the stereoinversion of LL-2,6-diaminopimelate (L,L-DAP) to meso-diaminopimelate (meso-DAP), a precursor of L-lysine and an essential component of the bacterial peptidoglycan. The chain is Diaminopimelate epimerase from Pelagibacter ubique (strain HTCC1062).